Consider the following 441-residue polypeptide: Acidic phosphoprotein (441 aa).

Positions 1–15 (MKAISLGLISSIIFS) form a signal peptide, or 24. N21 and N112 each carry an N-linked (GlcNAc...) asparagine glycan. 18 repeat units span residues 186–193 (EEDPYLLQ), 194–201 (EEDALSLM), 202–209 (EYDAETLN), 210–217 (EGDAETLN), 218–225 (EGDAETLN), 226–233 (EYDAGTLN), 234–241 (EEDAGTTN), 242–249 (EAGEGTTN), 250–257 (EEGEGAAN), 258–265 (EYDAETLN), 266–273 (EYDADTLN), 274–281 (EYDAGTLN), 282–289 (EYDAGTLN), 290–297 (EEEGSTTN), 298–305 (EAGEGTSN), 306–313 (EAGEGTAN), 353–360 (KGNENEGE), and 361–368 (QKGNENEG). Residues 186-313 (EEDPYLLQEE…SNEAGEGTAN (128 aa)) form a 16 X 8 AA tandem repeats region. Residues 232-416 (LNEEDAGTTN…EKEKKKEKKV (185 aa)) form a disordered region. Residues 238 to 247 (GTTNEAGEGT) show a composition bias toward low complexity. A compositionally biased stretch (acidic residues) spans 248–273 (TNEEGEGAANEYDAETLNEYDADTLN). A compositionally biased stretch (polar residues) spans 294–306 (STTNEAGEGTSNE). A compositionally biased stretch (acidic residues) spans 312–332 (ANDDEELDEEVASIFDDDEHA). Residues 349-371 (ENVKKGNENEGEQKGNENEGEQK) are compositionally biased toward basic and acidic residues. A 2 X 9 AA tandem repeats region spans residues 353–370 (KGNENEGEQKGNENEGEQ). Over residues 372–415 (GKKKKAKEKSKKKVKNKPTMTTKKKKKKEKKKKKKEKEKKKEKK) the composition is skewed to basic residues.

It localises to the cell membrane. Functionally, during infection, this phosphoprotein probably modulates the structure of the red cell membrane to the advantage of the parasite, although its precise function is not known. The polypeptide is Acidic phosphoprotein (PCEMA1) (Plasmodium chabaudi).